A 252-amino-acid chain; its full sequence is Phosphate import ATP-binding protein PstB (252 aa).

An ABC transporter domain is found at 6–247; it reads ISAENLNLFY…PKDQRTEDYI (242 aa). 38 to 45 serves as a coordination point for ATP; it reads GPSGCGKS.

It belongs to the ABC transporter superfamily. Phosphate importer (TC 3.A.1.7) family. The complex is composed of two ATP-binding proteins (PstB), two transmembrane proteins (PstC and PstA) and a solute-binding protein (PstS).

It is found in the cell membrane. It catalyses the reaction phosphate(out) + ATP + H2O = ADP + 2 phosphate(in) + H(+). Part of the ABC transporter complex PstSACB involved in phosphate import. Responsible for energy coupling to the transport system. This chain is Phosphate import ATP-binding protein PstB, found in Heliobacterium mobile (Heliobacillus mobilis).